The chain runs to 475 residues: ATP synthase subunit beta (475 aa).

Residue 155–162 coordinates ATP; that stretch reads GGAGVGKT.

Belongs to the ATPase alpha/beta chains family. In terms of assembly, F-type ATPases have 2 components, CF(1) - the catalytic core - and CF(0) - the membrane proton channel. CF(1) has five subunits: alpha(3), beta(3), gamma(1), delta(1), epsilon(1). CF(0) has three main subunits: a(1), b(2) and c(9-12). The alpha and beta chains form an alternating ring which encloses part of the gamma chain. CF(1) is attached to CF(0) by a central stalk formed by the gamma and epsilon chains, while a peripheral stalk is formed by the delta and b chains.

Its subcellular location is the cell inner membrane. The enzyme catalyses ATP + H2O + 4 H(+)(in) = ADP + phosphate + 5 H(+)(out). In terms of biological role, produces ATP from ADP in the presence of a proton gradient across the membrane. The catalytic sites are hosted primarily by the beta subunits. In Rhizobium etli (strain CIAT 652), this protein is ATP synthase subunit beta.